The chain runs to 221 residues: Sugar transporter SWEET1 (221 aa).

Transmembrane regions (helical) follow at residues 3–23, 42–62, 68–88, 96–116, 129–149, 160–180, and 186–206; these read AGGFLDSLIYGACVVFTLGMF, VQFLPFLTTEVNNLGWLSYGA, ILIVVNTVGAALQTLYILAYL, VVLLQTATLLGVLLLGYGYFW, LGLFCSVFTISMYLSPLADLA, LSYPLTIATLLTSASWCLYGF, and YIMVSNFPGIVTSFIRFWLFW. The region spanning 10-94 is the MtN3/slv 1 domain; it reads LIYGACVVFT…LAYLHYCPRK (85 aa). One can recognise a MtN3/slv 2 domain in the interval 127 to 212; the sequence is QQLGLFCSVF…WLFWKYPQEQ (86 aa). The segment at 149–221 is mediates interaction with TRPV2; it reads AKVIQTKSTQ…QDRNYWLLQT (73 aa).

Belongs to the SWEET sugar transporter family. Interacts with TRPV2; the interaction probably occurs intracellularly and depends on TRPV2 N-glycosylation. Ubiquitously expressed with highest expression in oviduct, epididymis and intestine.

The protein localises to the golgi apparatus membrane. It localises to the cell membrane. In terms of biological role, mediates sugar transport across membranes. May stimulate V(D)J recombination by the activation of RAG1. This chain is Sugar transporter SWEET1 (SLC50A1), found in Homo sapiens (Human).